Consider the following 213-residue polypeptide: Iron sulfur cluster assembly protein 1, mitochondrial (213 aa).

It belongs to the NifU family. Component of the core Fe-S cluster (ISC) assembly machinery. Requires [2Fe-2S] cluster as cofactor.

The protein resides in the mitochondrion matrix. The protein operates within cofactor biosynthesis; iron-sulfur cluster biosynthesis. Its function is as follows. Scaffold protein for the de novo synthesis of iron-sulfur (Fe-S) clusters within mitochondria, which is required for maturation of both mitochondrial and cytoplasmic [2Fe-2S] and [4Fe-4S] proteins. First, a [2Fe-2S] cluster is transiently assembled on the scaffold protein ISU1. In a second step, the cluster is released from ISU1, transferred to a glutaredoxin, followed by the formation of mitochondrial [2Fe-2S] proteins, the synthesis of [4Fe-4S] clusters and their target-specific insertion into the recipient apoproteins. Cluster assembly on ISU1 depends on the function of the cysteine desulfurase complex NFS1-ISD11, which serves as the sulfur donor for cluster synthesis, the iron-binding protein frataxin as the putative iron donor, and the electron transfer chain comprised of ferredoxin reductase and ferredoxin, which receive their electrons from NADH. The polypeptide is Iron sulfur cluster assembly protein 1, mitochondrial (ISU1) (Candida glabrata (strain ATCC 2001 / BCRC 20586 / JCM 3761 / NBRC 0622 / NRRL Y-65 / CBS 138) (Yeast)).